The primary structure comprises 256 residues: UPF0259 membrane protein plu2479 (256 aa).

A run of 5 helical transmembrane segments spans residues 23–43, 89–109, 132–152, 192–212, and 221–241; these read TLTLAVLAALVTTLLGHLFIP, IFSSMIGSVLLVGGVLTLVAA, LFLLLLICTLLIQFGLMLMLV, LLVPAILLWLTARLLLVFIID, and MAGIILGVFNNLISAILLIYL.

This sequence belongs to the UPF0259 family.

The protein resides in the cell inner membrane. This is UPF0259 membrane protein plu2479 from Photorhabdus laumondii subsp. laumondii (strain DSM 15139 / CIP 105565 / TT01) (Photorhabdus luminescens subsp. laumondii).